The following is a 323-amino-acid chain: MIRSVVRGIGSALPKRVMKNTDFEGIVETSDEWIVQRTGIRERHIAGEGETTVSLGAAAARAAIENAGLQPSDIDLVLLATSTPNNTFPASAVAIQRELGITRGFAFDLQAVCSGFIYAITTADLYIRGGMARRVLVIGAETFSRILDWTDRTTCVLFGDGAGAIVLEAAEGHGLTSDRGILATNLRSDGNHKEKLYVDGGPSTTQTVGHLRMEGREVFKHAVGMITDVIEASFEATGLTAEDIDWFVPHQANKRIIDASAKKLHIAEEKVVITVDRHGNTSAASVPLALATAVADGRIKKGDLVLLEAMGGGFTWGAVLVRW.

Residues Cys113 and His250 contribute to the active site. Positions 251 to 255 (QANKR) are ACP-binding. Asn280 is a catalytic residue.

Belongs to the thiolase-like superfamily. FabH family. In terms of assembly, homodimer.

The protein localises to the cytoplasm. It catalyses the reaction malonyl-[ACP] + acetyl-CoA + H(+) = 3-oxobutanoyl-[ACP] + CO2 + CoA. The protein operates within lipid metabolism; fatty acid biosynthesis. Its function is as follows. Catalyzes the condensation reaction of fatty acid synthesis by the addition to an acyl acceptor of two carbons from malonyl-ACP. Catalyzes the first condensation reaction which initiates fatty acid synthesis and may therefore play a role in governing the total rate of fatty acid production. Possesses both acetoacetyl-ACP synthase and acetyl transacylase activities. Its substrate specificity determines the biosynthesis of branched-chain and/or straight-chain of fatty acids. This is Beta-ketoacyl-[acyl-carrier-protein] synthase III from Brucella suis (strain ATCC 23445 / NCTC 10510).